The chain runs to 647 residues: Threonine--tRNA ligase (647 aa).

Residues 1-61 (MIKITFPDGA…EEDGSIEIVT (61 aa)) enclose the TGS domain. A catalytic region spans residues 240–538 (DHRKLGKELD…LIETYKGAFP (299 aa)). Zn(2+) contacts are provided by Cys-334, His-385, and His-515.

This sequence belongs to the class-II aminoacyl-tRNA synthetase family. Homodimer. The cofactor is Zn(2+).

The protein resides in the cytoplasm. The catalysed reaction is tRNA(Thr) + L-threonine + ATP = L-threonyl-tRNA(Thr) + AMP + diphosphate + H(+). Catalyzes the attachment of threonine to tRNA(Thr) in a two-step reaction: L-threonine is first activated by ATP to form Thr-AMP and then transferred to the acceptor end of tRNA(Thr). Also edits incorrectly charged L-seryl-tRNA(Thr). This chain is Threonine--tRNA ligase, found in Streptococcus pyogenes serotype M49 (strain NZ131).